Reading from the N-terminus, the 82-residue chain is Small ribosomal subunit protein uS17 (82 aa).

This sequence belongs to the universal ribosomal protein uS17 family. In terms of assembly, part of the 30S ribosomal subunit.

Its function is as follows. One of the primary rRNA binding proteins, it binds specifically to the 5'-end of 16S ribosomal RNA. The protein is Small ribosomal subunit protein uS17 of Shewanella frigidimarina (strain NCIMB 400).